Reading from the N-terminus, the 58-residue chain is MPSSKKKKETVPLASMAGLIRYYEEENEKIKISPKLLIIISIIMVAGVIVASILIPPP.

Residues 1-33 (MPSSKKKKETVPLASMAGLIRYYEEENEKIKIS) lie on the Cytoplasmic side of the membrane. The helical transmembrane segment at 34–53 (PKLLIIISIIMVAGVIVASI) threads the bilayer. The Extracellular portion of the chain corresponds to 54–58 (LIPPP).

The protein belongs to the SEC61-beta family. Component of the protein translocase complex. Heterotrimer consisting of alpha (SecY), beta (SecG) and gamma (SecE) subunits. Can form oligomers of the heterotrimer.

The protein localises to the cell membrane. Involved in protein export. The function of the beta subunit is unknown, but it may be involved in stabilization of the trimeric complex. The polypeptide is Preprotein translocase subunit SecG (secG) (Sulfurisphaera tokodaii (strain DSM 16993 / JCM 10545 / NBRC 100140 / 7) (Sulfolobus tokodaii)).